A 157-amino-acid chain; its full sequence is Peptide methionine sulfoxide reductase MsrA (157 aa).

Residue Cys-10 is part of the active site.

This sequence belongs to the MsrA Met sulfoxide reductase family.

It carries out the reaction L-methionyl-[protein] + [thioredoxin]-disulfide + H2O = L-methionyl-(S)-S-oxide-[protein] + [thioredoxin]-dithiol. It catalyses the reaction [thioredoxin]-disulfide + L-methionine + H2O = L-methionine (S)-S-oxide + [thioredoxin]-dithiol. Functionally, has an important function as a repair enzyme for proteins that have been inactivated by oxidation. Catalyzes the reversible oxidation-reduction of methionine sulfoxide in proteins to methionine. The polypeptide is Peptide methionine sulfoxide reductase MsrA (Clostridium botulinum (strain Hall / ATCC 3502 / NCTC 13319 / Type A)).